The sequence spans 564 residues: Serine/threonine-protein kinase PknA (564 aa).

The Protein kinase domain occupies 9 to 271 (YRVIKTLGSG…TAREMLEALQ (263 aa)). ATP is bound by residues 15–23 (LGSGGFGET) and Lys40. Asp139 acts as the Proton acceptor in catalysis. The span at 360-406 (QPVTQTTSLPSETTISNNDTPTVEPSPTDTPETPISQTVTQDPTPQA) shows a compositional bias: polar residues. A disordered region spans residues 360–458 (QPVTQTTSLP…PVEATDRPSP (99 aa)). Low complexity predominate over residues 428–445 (TTEPTTSVPQPTTPSEPQ).

Belongs to the protein kinase superfamily. Ser/Thr protein kinase family.

The enzyme catalyses L-seryl-[protein] + ATP = O-phospho-L-seryl-[protein] + ADP + H(+). It carries out the reaction L-threonyl-[protein] + ATP = O-phospho-L-threonyl-[protein] + ADP + H(+). Its function is as follows. Probably required for both normal cellular growth and differentiation. Inactivation of pknA leads to colonies that appear light green and rough in the absence of combined nitrogen. This chain is Serine/threonine-protein kinase PknA (pknA), found in Nostoc sp. (strain PCC 7120 / SAG 25.82 / UTEX 2576).